The following is a 229-amino-acid chain: Large ribosomal subunit protein uL1 (229 aa).

Belongs to the universal ribosomal protein uL1 family. In terms of assembly, part of the 50S ribosomal subunit.

Its function is as follows. Binds directly to 23S rRNA. The L1 stalk is quite mobile in the ribosome, and is involved in E site tRNA release. Protein L1 is also a translational repressor protein, it controls the translation of the L11 operon by binding to its mRNA. This chain is Large ribosomal subunit protein uL1, found in Leifsonia xyli subsp. xyli (strain CTCB07).